Consider the following 538-residue polypeptide: Sucrose transport protein SUT1 (538 aa).

Residues 1-52 lie on the Cytoplasmic side of the membrane; the sequence is MARGSGAGGGGGGGGGGLELSVGVGGGGGARGGGGGEAAAAVETAAPISLGR. A helical transmembrane segment spans residues 53–73; sequence LILSGMVAGGVQYGWALQLSL. The Extracellular portion of the chain corresponds to 74–81; the sequence is LTPYVQTL. The helical transmembrane segment at 82 to 102 threads the bilayer; the sequence is GLSHALTSFMWLCGPIAGMVV. Over 103-123 the chain is Cytoplasmic; the sequence is QPCVGLYSDRCTSKWGRRRPY. Residues 124–144 form a helical membrane-spanning segment; it reads ILTGCVLICLAVVVIGFSADI. Residues 145–162 lie on the Extracellular side of the membrane; the sequence is GYAMGDTKEDCSVYHGSR. Residues 163 to 183 traverse the membrane as a helical segment; sequence WHAAIVYVLGFWLLDFSNNTV. Residues 184-198 are Cytoplasmic-facing; sequence QGPARALMADLSGRH. The chain crosses the membrane as a helical span at residues 199-219; sequence GPGTANSIFCSWMAMGNILGY. Topologically, residues 220–247 are extracellular; that stretch reads SSGSTNNWHKWFPFLKTRACCEACANLK. A helical membrane pass occupies residues 248-268; the sequence is GAFLVAVIFLSLCLVITLIFA. The Cytoplasmic segment spans residues 269-306; the sequence is KEVPFKGNAALPTKSNEPAEPEGTGPLAVLKGFRNLPT. A helical membrane pass occupies residues 307–327; it reads GMPSVLIVTGLTWLSWFPFIL. The Extracellular segment spans residues 328 to 357; sequence YDTDWMGREIYHGDPKGTDPQIEAFNQGVR. A helical transmembrane segment spans residues 358-378; the sequence is AGAFGLLLNSIVLGFSSFLIE. Residues 379 to 388 are Cytoplasmic-facing; sequence PMCRKVGPRV. Residues 389 to 409 traverse the membrane as a helical segment; the sequence is VWVTSNFLVCIAMAATALISF. Residues 410-433 are Extracellular-facing; the sequence is WSLKDFHGTVQKAITADKSIKAVC. Residues 434 to 454 form a helical membrane-spanning segment; that stretch reads LVLFAFLGVPLAVLYSVPFAV. The Cytoplasmic portion of the chain corresponds to 455-470; the sequence is TAQLAATRGGGQGLCT. A helical membrane pass occupies residues 471 to 491; it reads GVLNISIVIPQVVIALGAGPW. At 492–499 the chain is on the extracellular side; sequence DELFGKGN. A helical membrane pass occupies residues 500-520; that stretch reads IPAFGLASGFALIGGVAGIFL. The Cytoplasmic portion of the chain corresponds to 521–538; that stretch reads LPKISKRQFRSVSMGGGH.

It belongs to the glycoside-pentoside-hexuronide (GPH) cation symporter transporter (TC 2.A.2.4) family. As to quaternary structure, homodimer.

Its subcellular location is the cell membrane. It participates in glycan biosynthesis; sucrose metabolism. Functionally, responsible for the transport of sucrose into the cell, with the concomitant uptake of protons (symport system). May also transport other glucosides. May be required for apoplastic phloem sucrose loading in source tissues (e.g. leaves) in order to transport it to sink tissues (e.g. roots, flowers). The protein is Sucrose transport protein SUT1 (SUT1) of Oryza sativa subsp. indica (Rice).